We begin with the raw amino-acid sequence, 862 residues long: DNA gyrase subunit A (862 aa).

The region spanning 38 to 501 (LPDARDGLKP…DYDDIDVEDL (464 aa)) is the Topo IIA-type catalytic domain. Tyrosine 126 (O-(5'-phospho-DNA)-tyrosine intermediate) is an active-site residue. The short motif at 528–534 (QKRGGKG) is the GyrA-box element. Residues 843–862 (KEESDDDDIVADDTQEQDME) form a disordered region. Over residues 845 to 862 (ESDDDDIVADDTQEQDME) the composition is skewed to acidic residues.

This sequence belongs to the type II topoisomerase GyrA/ParC subunit family. In terms of assembly, heterotetramer, composed of two GyrA and two GyrB chains. In the heterotetramer, GyrA contains the active site tyrosine that forms a transient covalent intermediate with DNA, while GyrB binds cofactors and catalyzes ATP hydrolysis.

Its subcellular location is the cytoplasm. It catalyses the reaction ATP-dependent breakage, passage and rejoining of double-stranded DNA.. Its function is as follows. A type II topoisomerase that negatively supercoils closed circular double-stranded (ds) DNA in an ATP-dependent manner to modulate DNA topology and maintain chromosomes in an underwound state. Negative supercoiling favors strand separation, and DNA replication, transcription, recombination and repair, all of which involve strand separation. Also able to catalyze the interconversion of other topological isomers of dsDNA rings, including catenanes and knotted rings. Type II topoisomerases break and join 2 DNA strands simultaneously in an ATP-dependent manner. The polypeptide is DNA gyrase subunit A (Campylobacter fetus).